The primary structure comprises 129 residues: Fluoride-specific ion channel FluC 2 (129 aa).

The next 4 membrane-spanning stretches (helical) occupy residues 4 to 24 (LDVM…WWIG), 39 to 59 (TFLI…LFGV), 65 to 85 (YGTM…TTFS), and 104 to 124 (VFYL…GAML). Residues glycine 79 and threonine 82 each coordinate Na(+).

The protein belongs to the fluoride channel Fluc/FEX (TC 1.A.43) family.

Its subcellular location is the cell inner membrane. It catalyses the reaction fluoride(in) = fluoride(out). Its activity is regulated as follows. Na(+) is not transported, but it plays an essential structural role and its presence is essential for fluoride channel function. Fluoride-specific ion channel. Important for reducing fluoride concentration in the cell, thus reducing its toxicity. In Brucella abortus biovar 1 (strain 9-941), this protein is Fluoride-specific ion channel FluC 2.